The chain runs to 407 residues: uncharacterized protein (407 aa).

This is an uncharacterized protein from Saimiriine herpesvirus 2 (strain 11) (SaHV-2).